A 246-amino-acid chain; its full sequence is MADS-box transcription factor 14 (246 aa).

The MADS-box domain occupies 1–61 (MGRGKVQLKR…GKLYKYATDS (61 aa)). One can recognise a K-box domain in the interval 88 to 178 (QGNWCHEYRK…QKELVEKQKV (91 aa)). Positions 180–199 (KQQVQWDQTQPQTSSSSSSF) are disordered.

In terms of tissue distribution, highly expressed in sterile lemmas, at intermediate levels in stamens, and weakly in lemmas, paleas and carpels.

The protein resides in the nucleus. In terms of biological role, probable transcription factor. This is MADS-box transcription factor 14 (MADS14) from Oryza sativa subsp. indica (Rice).